A 196-amino-acid polypeptide reads, in one-letter code: Small ribosomal subunit protein uS4c (196 aa).

One can recognise an S4 RNA-binding domain in the interval 89–149 (MRLDNILFRL…DKQRSKALIQ (61 aa)).

This sequence belongs to the universal ribosomal protein uS4 family. Part of the 30S ribosomal subunit. Contacts protein S5. The interaction surface between S4 and S5 is involved in control of translational fidelity.

It is found in the plastid. It localises to the chloroplast. Its function is as follows. One of the primary rRNA binding proteins, it binds directly to 16S rRNA where it nucleates assembly of the body of the 30S subunit. In terms of biological role, with S5 and S12 plays an important role in translational accuracy. The sequence is that of Small ribosomal subunit protein uS4c (rps4) from Asparagus maritimus (Sea asparagus).